The primary structure comprises 181 residues: MICGIDEVGRGCIFGPVLSAAVVFKKKPNFIKELDDSKKLKKEKREYLSSLILENSYYAFAEISNIIIEKINIHNATLLAMQTAYENLKLNCSLVFVDGKFVPKITAKTVKAIIKGDSIIDEIKAASIIAKVKRDKLMDEYDKIYPLYLLRKNKGYPTKEHKNAIKKYGVLSLHRRNFKLI.

The region spanning 1–181 is the RNase H type-2 domain; it reads MICGIDEVGR…SLHRRNFKLI (181 aa). Residues Asp6, Glu7, and Asp98 each contribute to the a divalent metal cation site.

It belongs to the RNase HII family. Mn(2+) is required as a cofactor. Requires Mg(2+) as cofactor.

Its subcellular location is the cytoplasm. The enzyme catalyses Endonucleolytic cleavage to 5'-phosphomonoester.. In terms of biological role, endonuclease that specifically degrades the RNA of RNA-DNA hybrids. This chain is Ribonuclease HII, found in Borrelia garinii subsp. bavariensis (strain ATCC BAA-2496 / DSM 23469 / PBi) (Borreliella bavariensis).